The following is a 437-amino-acid chain: Doublesex- and mab-3-related transcription factor A2 (437 aa).

The segment at residues C49–R96 is a DNA-binding region (DM). Disordered stretches follow at residues S163 to R254 and D297 to S317. Composition is skewed to low complexity over residues S179–E201 and S223–G235. The DMA domain maps to R254–Q289.

It belongs to the DMRT family.

It is found in the nucleus. In terms of biological role, may be involved in sexual development. The sequence is that of Doublesex- and mab-3-related transcription factor A2 (dmrta2) from Xenopus tropicalis (Western clawed frog).